The following is a 95-amino-acid chain: Large ribosomal subunit protein bL25 (95 aa).

Belongs to the bacterial ribosomal protein bL25 family. Part of the 50S ribosomal subunit; part of the 5S rRNA/L5/L18/L25 subcomplex. Contacts the 5S rRNA. Binds to the 5S rRNA independently of L5 and L18.

This is one of the proteins that binds to the 5S RNA in the ribosome where it forms part of the central protuberance. This chain is Large ribosomal subunit protein bL25, found in Buchnera aphidicola subsp. Acyrthosiphon pisum (strain 5A).